A 172-amino-acid chain; its full sequence is Co-chaperone protein HscB homolog (172 aa).

Residues Asn2 to Leu69 form the J domain.

This sequence belongs to the HscB family. Interacts with HscA and stimulates its ATPase activity.

Functionally, co-chaperone involved in the maturation of iron-sulfur cluster-containing proteins. Seems to help targeting proteins to be folded toward HscA. The chain is Co-chaperone protein HscB homolog from Acinetobacter baumannii (strain AB307-0294).